A 441-amino-acid chain; its full sequence is Actin-related protein 4 (441 aa).

A disordered region spans residues 48 to 73 (VDVDSTKTNSNSEDSKTESEKEKSKR). A compositionally biased stretch (basic and acidic residues) spans 60–70 (EDSKTESEKEK).

This sequence belongs to the actin family. ARP4 subfamily. Component of the SWR1 chromatin-remodeling complex and of the NuA4 histone acetyltransferase complex. Interacts with the SWI/SNF complex. Interacts with EAF1A and EAF1B. In terms of tissue distribution, mostly expressed in flowers, and, to a lower extent, in roots, seedlings, leaves and siliques (at protein level).

It localises to the nucleus. Its subcellular location is the cytoplasm. In terms of biological role, involved in several developmental processes including organization of plant organs, flowering time, anther development, flower senescence and fertility, probably by regulating the chromatin structure. The sequence is that of Actin-related protein 4 from Arabidopsis thaliana (Mouse-ear cress).